We begin with the raw amino-acid sequence, 313 residues long: 4-diphosphocytidyl-2-C-methyl-D-erythritol kinase (313 aa).

Lys-27 is a catalytic residue. An ATP-binding site is contributed by Pro-110–Ser-120. The active site involves Asp-152.

The protein belongs to the GHMP kinase family. IspE subfamily.

The catalysed reaction is 4-CDP-2-C-methyl-D-erythritol + ATP = 4-CDP-2-C-methyl-D-erythritol 2-phosphate + ADP + H(+). Its pathway is isoprenoid biosynthesis; isopentenyl diphosphate biosynthesis via DXP pathway; isopentenyl diphosphate from 1-deoxy-D-xylulose 5-phosphate: step 3/6. Its function is as follows. Catalyzes the phosphorylation of the position 2 hydroxy group of 4-diphosphocytidyl-2C-methyl-D-erythritol. The chain is 4-diphosphocytidyl-2-C-methyl-D-erythritol kinase from Histophilus somni (strain 2336) (Haemophilus somnus).